A 290-amino-acid polypeptide reads, in one-letter code: CMRF35-like molecule 1 (290 aa).

An N-terminal signal peptide occupies residues M1 to V19. An Ig-like V-type domain is found at T20–D126. Residues T20–S156 lie on the Extracellular side of the membrane. 2 cysteine pairs are disulfide-bonded: C40-C108 and C54-C62. N-linked (GlcNAc...) asparagine glycosylation is present at N88. A helical transmembrane segment spans residues V157 to A177. Over W178 to P290 the chain is Cytoplasmic. The tract at residues G267–P290 is disordered.

This sequence belongs to the CD300 family. As to quaternary structure, interacts with PTPN6/SHP-1 in a tyrosine phosphorylation dependent manner. Interacts with IL4R. In terms of processing, phosphorylated on tyrosine. As to expression, highly expressed in spleen, peripheral blood leukocyte and monocyte, and lung. Weakly expressed in thymus, heart, brain, placenta, liver, skeletal muscle, kidney, pancreas, prostate, testis, ovary, small intestine or colon. Expressed selectively in monocytes and monocyte-related cells.

The protein localises to the cell membrane. Acts as an inhibitory receptor for myeloid cells and mast cells. Positively regulates the phagocytosis of apoptotic cells (efferocytosis) via phosphatidylserine (PS) recognition; recognizes and binds PS as a ligand which is expressed on the surface of apoptotic cells. Plays an important role in the maintenance of immune homeostasis, by promoting macrophage-mediated efferocytosis and by inhibiting dendritic cell-mediated efferocytosis. Negatively regulates Fc epsilon receptor-dependent mast cell activation and allergic responses via binding to ceramide and sphingomyelin which act as ligands. May act as a coreceptor for interleukin 4 (IL-4). Associates with and regulates IL-4 receptor alpha-mediated responses by augmenting IL-4- and IL-13-induced signaling. Negatively regulates the Toll-like receptor (TLR) signaling mediated by MYD88 and TRIF through activation of PTPN6/SHP-1 and PTPN11/SHP-2. Inhibits osteoclast formation. Induces macrophage cell death upon engagement. This chain is CMRF35-like molecule 1 (CD300LF), found in Homo sapiens (Human).